Reading from the N-terminus, the 150-residue chain is Deoxyuridine 5'-triphosphate nucleotidohydrolase (150 aa).

Residues 69–71 (RSG), Asn82, and 86–88 (LID) contribute to the substrate site.

The protein belongs to the dUTPase family. Mg(2+) serves as cofactor.

The catalysed reaction is dUTP + H2O = dUMP + diphosphate + H(+). The protein operates within pyrimidine metabolism; dUMP biosynthesis; dUMP from dCTP (dUTP route): step 2/2. This enzyme is involved in nucleotide metabolism: it produces dUMP, the immediate precursor of thymidine nucleotides and it decreases the intracellular concentration of dUTP so that uracil cannot be incorporated into DNA. This is Deoxyuridine 5'-triphosphate nucleotidohydrolase from Chromobacterium violaceum (strain ATCC 12472 / DSM 30191 / JCM 1249 / CCUG 213 / NBRC 12614 / NCIMB 9131 / NCTC 9757 / MK).